The chain runs to 296 residues: UPF0761 membrane protein YE0031 (296 aa).

Transmembrane regions (helical) follow at residues 44–64, 67–87, 108–128, 136–156, 185–205, 212–232, and 246–266; these read LLSL…FPMF, ISIK…GDII, GLIV…NIIW, LVFS…LVGA, LFPL…VPTV, ALIG…GFTM, and VLAV…IVLL.

This sequence belongs to the UPF0761 family.

It is found in the cell inner membrane. In Yersinia enterocolitica serotype O:8 / biotype 1B (strain NCTC 13174 / 8081), this protein is UPF0761 membrane protein YE0031.